A 199-amino-acid chain; its full sequence is dITP/XTP pyrophosphatase (199 aa).

12–17 (SGNAGK) contributes to the substrate binding site. Catalysis depends on aspartate 73, which acts as the Proton acceptor. Residue aspartate 73 participates in Mg(2+) binding. Residues serine 74, 157–160 (FGYD), lysine 180, and 185–186 (HR) each bind substrate.

It belongs to the HAM1 NTPase family. In terms of assembly, homodimer. The cofactor is Mg(2+).

It catalyses the reaction XTP + H2O = XMP + diphosphate + H(+). The enzyme catalyses dITP + H2O = dIMP + diphosphate + H(+). It carries out the reaction ITP + H2O = IMP + diphosphate + H(+). Functionally, pyrophosphatase that catalyzes the hydrolysis of nucleoside triphosphates to their monophosphate derivatives, with a high preference for the non-canonical purine nucleotides XTP (xanthosine triphosphate), dITP (deoxyinosine triphosphate) and ITP. Seems to function as a house-cleaning enzyme that removes non-canonical purine nucleotides from the nucleotide pool, thus preventing their incorporation into DNA/RNA and avoiding chromosomal lesions. The chain is dITP/XTP pyrophosphatase from Neisseria meningitidis serogroup A / serotype 4A (strain DSM 15465 / Z2491).